Reading from the N-terminus, the 434-residue chain is Trigger factor (434 aa).

Positions 161 to 246 constitute a PPIase FKBP-type domain; that stretch reads EDRATIDFSG…LKKVEERELP (86 aa).

The protein belongs to the FKBP-type PPIase family. Tig subfamily.

It is found in the cytoplasm. It catalyses the reaction [protein]-peptidylproline (omega=180) = [protein]-peptidylproline (omega=0). Involved in protein export. Acts as a chaperone by maintaining the newly synthesized protein in an open conformation. Functions as a peptidyl-prolyl cis-trans isomerase. This is Trigger factor from Erwinia tasmaniensis (strain DSM 17950 / CFBP 7177 / CIP 109463 / NCPPB 4357 / Et1/99).